Here is a 138-residue protein sequence, read N- to C-terminus: Putative pre-16S rRNA nuclease (138 aa).

The protein belongs to the YqgF nuclease family.

The protein resides in the cytoplasm. Could be a nuclease involved in processing of the 5'-end of pre-16S rRNA. This chain is Putative pre-16S rRNA nuclease, found in Escherichia fergusonii (strain ATCC 35469 / DSM 13698 / CCUG 18766 / IAM 14443 / JCM 21226 / LMG 7866 / NBRC 102419 / NCTC 12128 / CDC 0568-73).